The primary structure comprises 173 residues: NAD(P)H-quinone oxidoreductase subunit I, chloroplastic (173 aa).

4Fe-4S ferredoxin-type domains are found at residues 55-84 and 95-124; these read GRIHFEFDKCIACEVCVRVCPINLPVVDWD and RSYSIDFGVCIFCGNCVEYCPTNCLSMTEE. 8 residues coordinate [4Fe-4S] cluster: Cys64, Cys67, Cys70, Cys74, Cys104, Cys107, Cys110, and Cys114.

Belongs to the complex I 23 kDa subunit family. As to quaternary structure, NDH is composed of at least 16 different subunits, 5 of which are encoded in the nucleus. [4Fe-4S] cluster serves as cofactor.

The protein resides in the plastid. It is found in the chloroplast thylakoid membrane. The catalysed reaction is a plastoquinone + NADH + (n+1) H(+)(in) = a plastoquinol + NAD(+) + n H(+)(out). It carries out the reaction a plastoquinone + NADPH + (n+1) H(+)(in) = a plastoquinol + NADP(+) + n H(+)(out). In terms of biological role, NDH shuttles electrons from NAD(P)H:plastoquinone, via FMN and iron-sulfur (Fe-S) centers, to quinones in the photosynthetic chain and possibly in a chloroplast respiratory chain. The immediate electron acceptor for the enzyme in this species is believed to be plastoquinone. Couples the redox reaction to proton translocation, and thus conserves the redox energy in a proton gradient. The polypeptide is NAD(P)H-quinone oxidoreductase subunit I, chloroplastic (Nephroselmis olivacea (Green alga)).